We begin with the raw amino-acid sequence, 482 residues long: Complement C1r subcomponent-like protein (482 aa).

The N-terminal stretch at 1 to 43 (MSGFRGLVPELENSLWSSPTTSCMSKMCWWLLWGILHTCPTQA) is a signal peptide. One can recognise a CUB domain in the interval 44 to 166 (SVLLAQQSPQ…KGFLALYQAV (123 aa)). Intrachain disulfides connect C97–C115 and C190–C223. In terms of domain architecture, Sushi spans 166-225 (VAVNQPNGDTEAVTTPGAPKIQNHCQDPYYKADQTGTLSCPSSWKWKDRQDGGEVPECVP). The Peptidase S1 domain maps to 240–479 (TFGSSRAKLG…YMDWIKRVIE (240 aa)). Catalysis depends on charge relay system residues H278 and D334. The N-linked (GlcNAc...) asparagine glycan is linked to N358. 2 cysteine pairs are disulfide-bonded: C397–C416 and C427–C457. The active-site Charge relay system is S431.

The protein belongs to the peptidase S1 family. In terms of tissue distribution, expressed in liver (at protein level).

The protein localises to the secreted. Mediates the proteolytic cleavage of HP/haptoglobin in the endoplasmic reticulum. This Mus musculus (Mouse) protein is Complement C1r subcomponent-like protein (C1rl).